A 309-amino-acid chain; its full sequence is Spermatid maturation protein 1 (309 aa).

A helical transmembrane segment spans residues 29 to 49; that stretch reads VLLLLGLIICINISINIVTLL. Residues 209–231 are disordered; it reads PPPPSPEAPSHKNGGEGAVPEAE. Positions 259 to 285 form a coiled coil; sequence RIVYDARDMRRRLRELTREVEALSGCY.

It is found in the membrane. Its subcellular location is the cytoplasm. Its function is as follows. Required for proper cytoplasm removal during spermatogenesis. This chain is Spermatid maturation protein 1 (SPEM1), found in Homo sapiens (Human).